A 157-amino-acid polypeptide reads, in one-letter code: Crossover junction endodeoxyribonuclease RuvC (157 aa).

Active-site residues include aspartate 7, glutamate 66, and aspartate 139. The Mg(2+) site is built by aspartate 7, glutamate 66, and aspartate 139.

It belongs to the RuvC family. Homodimer which binds Holliday junction (HJ) DNA. The HJ becomes 2-fold symmetrical on binding to RuvC with unstacked arms; it has a different conformation from HJ DNA in complex with RuvA. In the full resolvosome a probable DNA-RuvA(4)-RuvB(12)-RuvC(2) complex forms which resolves the HJ. It depends on Mg(2+) as a cofactor.

Its subcellular location is the cytoplasm. It catalyses the reaction Endonucleolytic cleavage at a junction such as a reciprocal single-stranded crossover between two homologous DNA duplexes (Holliday junction).. Its function is as follows. The RuvA-RuvB-RuvC complex processes Holliday junction (HJ) DNA during genetic recombination and DNA repair. Endonuclease that resolves HJ intermediates. Cleaves cruciform DNA by making single-stranded nicks across the HJ at symmetrical positions within the homologous arms, yielding a 5'-phosphate and a 3'-hydroxyl group; requires a central core of homology in the junction. The consensus cleavage sequence is 5'-(A/T)TT(C/G)-3'. Cleavage occurs on the 3'-side of the TT dinucleotide at the point of strand exchange. HJ branch migration catalyzed by RuvA-RuvB allows RuvC to scan DNA until it finds its consensus sequence, where it cleaves and resolves the cruciform DNA. The polypeptide is Crossover junction endodeoxyribonuclease RuvC (Campylobacter curvus (strain 525.92)).